The chain runs to 196 residues: Gastrula zinc finger protein xLCGF3.1 (196 aa).

C2H2-type zinc fingers lie at residues 6 to 28, 34 to 56, 62 to 84, 90 to 112, 118 to 140, 146 to 168, and 174 to 196; these read FMCT…HMTH, FTCT…QTIH, FTCI…YMTH, FTCT…QTMH, LTCT…QRVH, FTCT…QTVH, and FTCT…QIVH.

The protein belongs to the krueppel C2H2-type zinc-finger protein family.

The protein localises to the nucleus. In terms of biological role, may be involved in transcriptional regulation. The protein is Gastrula zinc finger protein xLCGF3.1 of Xenopus laevis (African clawed frog).